The following is an 864-amino-acid chain: 3-O-alpha-D-mannopyranosyl-alpha-D-mannopyranose xylosylphosphotransferase (864 aa).

The interval 1-66 is disordered; it reads MPSTALSPPS…VPPRSPSRKI (66 aa). Over 1–82 the chain is Cytoplasmic; the sequence is MPSTALSPPS…HIRPHITPRT (82 aa). Composition is skewed to low complexity over residues 16 to 29 and 42 to 52; these read SYDSYSSSLSPSSP and SPSPSRLESLL. A helical transmembrane segment spans residues 83 to 103; sequence LTPVFLWTLALWLIHHFLFPL. Residues 104 to 864 are Lumenal-facing; it reads SSPFAKLAKP…WDPVKDRYND (761 aa). Residues Asn-200, Asn-301, and Asn-583 are each glycosylated (N-linked (GlcNAc...) asparagine).

It belongs to the XPT1 family. Mn(2+) is required as a cofactor.

The protein resides in the golgi apparatus membrane. The catalysed reaction is 3-alpha-D-mannopyranosyl-alpha-D-mannopyranose + UDP-alpha-D-xylose = 3-O-(6-O-alpha-D-xylosylphospho-alpha-D-mannopyranosyl)-alpha-D-mannopyranose + UMP + H(+). Its function is as follows. Xylosylphosphotransferase that is specific for UDP-xylose as a donor and mannose as an acceptor to form a xylose-alpha-1-phosphate-6-mannose linkage. Functions in the O-glycosylation of proteins en route through the secretory pathway. This is 3-O-alpha-D-mannopyranosyl-alpha-D-mannopyranose xylosylphosphotransferase (XPT1) from Cryptococcus neoformans var. grubii (Filobasidiella neoformans var. grubii).